The chain runs to 200 residues: uncharacterized protein (200 aa).

Residues 7 to 29 (FFFLFSFISHAMMLTGLIGSSSF) traverse the membrane as a helical segment.

The protein localises to the membrane. This is an uncharacterized protein from Saccharomyces cerevisiae (strain ATCC 204508 / S288c) (Baker's yeast).